The chain runs to 345 residues: Trans-enoyl reductase tndF (345 aa).

The tract at residues 1 to 26 (MAREHQAAILPQPGGPLSVGMRPTPK) is disordered. NADP(+) contacts are provided by residues 44–49 (CDYYQR), 168–171 (SSSV), 191–194 (SPEH), tyrosine 209, and 244–245 (LD).

This sequence belongs to the zinc-containing alcohol dehydrogenase family.

Its pathway is secondary metabolite biosynthesis; terpenoid biosynthesis. Its function is as follows. Trans-enoyl reductase; part of the gene cluster that mediates the biosynthesis of talaronoid C, a fusicoccane diterpenoid with an unprecedented tricyclic 5/8/6 ring system. The first step in the pathway is performed by the fusicoccadiene synthase tndC that possesses both prenyl transferase and terpene cyclase activity, converting isopentenyl diphosphate and dimethylallyl diphosphate into geranylgeranyl diphosphate (GGDP) and further converting GGDP into talarodiene, a precursor for talaronoid C. The remaining enzymes from the cluster include the cytochrome P450 monooxygenase tndB, the aldehyde reductase tndE and the alcohol dehydrogenase tndF that are involved in the conversion of talarodiene into talaronoid C. The polypeptide is Trans-enoyl reductase tndF (Aspergillus flavipes).